Reading from the N-terminus, the 82-residue chain is Transcription elongation factor 1 homolog (82 aa).

Zn(2+)-binding residues include Cys26, Cys29, Cys50, and Cys53.

This sequence belongs to the ELOF1 family.

It localises to the nucleus. Its function is as follows. Transcription elongation factor implicated in the maintenance of proper chromatin structure in actively transcribed regions. This chain is Transcription elongation factor 1 homolog, found in Drosophila melanogaster (Fruit fly).